Reading from the N-terminus, the 274-residue chain is Large ribosomal subunit protein uL2 (274 aa).

A disordered region spans residues 223–274 (VAMNPVDHPMGGGEGKASGGHPRSRTGLYAKGKKTRNTNKYSKNYILSRKKR).

The protein belongs to the universal ribosomal protein uL2 family. Part of the 50S ribosomal subunit. Forms a bridge to the 30S subunit in the 70S ribosome.

Its function is as follows. One of the primary rRNA binding proteins. Required for association of the 30S and 50S subunits to form the 70S ribosome, for tRNA binding and peptide bond formation. It has been suggested to have peptidyltransferase activity; this is somewhat controversial. Makes several contacts with the 16S rRNA in the 70S ribosome. The polypeptide is Large ribosomal subunit protein uL2 (Amoebophilus asiaticus (strain 5a2)).